Reading from the N-terminus, the 939-residue chain is MTERTGKDARAPHVAGGAPSPAPAAEPESRRRDGGRLRASQTSDAPRVAAAAAAAAAAASAAPSAPSDRLLFSRRGQGADPGGKAQDAQPRPDVARADPRLEAASGAGADSPGPPRQDRGPLHGAPSTALRPAGPGQGRSSPAWEPRSPRCPSGPEPPEDPRGARSSQGAACPLMSRPEGKAGDGCGTAGAHKGPPRGLSPSRQPLPLCPGAHAWPGAAGKAATQPAALGVEDEGGFAAEGSPGPLLKGKPRPPAGPAAAAGAAPAAPGTAPGGTAPVPKEDSRLPAPKGSLAEQDAPAPGCSPLATTMMDFIHVPILPLGSAFLAARTRQLLEAETYDAGAFAPPRGSPSAPCAPLAAGDFPDCAYPSDAEPKDDAFPLYGDFQPPALKIKEEEEGAEAAARSPRPYLAAGPHSCVFADAPPALPALPPLPPRAPSSRPGEGAPAAAAAAGCSASSASSPGPALECVLYKAEGAPPPQGPFAAAPCRVPGAGACLLPRDGAAAAASAGAAGASPALYQPLGLGALPQLGYQAAVLKEGLPQVYQPYLNYLRPDSDASQSPQYSFESLPQKICLICGDEASGCHYGVLTCGSCKVFFKRAMEGQHNYLCAGRNDCIVDKIRRKNCPACRLRKCCQAGMVLGGRKFKKFNKVRVMRTLDAVALPQPVGIPNESQALSQRISFSPSQDIQLIPPLINLLMSIEPDVIYAGHDNTKPDTSSSLLTSLNQLGERQLLSVVKWSKSLPGFRNLHIDDQITLIQYSWMSLMVFGLGWRSYKHVSGQMLYFAPDLILNEQRMKESSFYSLCLTMWQIPQEFVKLQVSQEEFLCMKVLLLLNTIPLEGLRSQNQFEEMRSSYIRELIKAIGLRQKGVVSSSQRFYQLTKLLDNLHDLVKQLHLYCLNTFIQSRALSVEFPEMMSEVIAAQLPKILAGMVKPLLFHKK.

Residues methionine 1–alanine 11 show a composition bias toward basic and acidic residues. Residues methionine 1 to leucine 174 form an AF3; mediates transcriptional activation (in isoform B) region. The disordered stretch occupies residues methionine 1 to cysteine 302. The segment at methionine 1–isoleucine 572 is modulating, Ala/Pro-rich. Lysine 7 participates in a covalent cross-link: Glycyl lysine isopeptide (Lys-Gly) (interchain with G-Cter in SUMO). A compositionally biased stretch (low complexity) spans alanine 15–glutamate 26. Serine 20 bears the Phosphoserine mark. Residues proline 27–arginine 36 show a composition bias toward basic and acidic residues. The span at alanine 49–serine 67 shows a compositional bias: low complexity. Serine 141 is modified (phosphoserine). The mediates transcriptional transrepression (in isoform A) stretch occupies residues methionine 175–histidine 314. The short motif at lysine 193 to arginine 197 is the Nuclear localization signal element. Serine 200 is subject to Phosphoserine. 2 stretches are compositionally biased toward low complexity: residues glycine 211–glycine 230 and proline 257–valine 278. Serine 303 is modified (phosphoserine; by MAPK1). Position 349 is a phosphoserine; by MAPK (serine 349). Residue lysine 392 forms a Glycyl lysine isopeptide (Lys-Gly) (interchain with G-Cter in SUMO); alternate linkage. Residue lysine 392 forms a Glycyl lysine isopeptide (Lys-Gly) (interchain with G-Cter in ubiquitin); alternate linkage. Position 404 is a phosphoserine; by CDK2 (serine 404). Positions proline 463 to arginine 552 are AF1; mediates transcriptional activation. Lysine 537 is covalently cross-linked (Glycyl lysine isopeptide (Lys-Gly) (interchain with G-Cter in SUMO)). 2 consecutive NR C4-type zinc fingers follow at residues cysteine 573–cysteine 593 and cysteine 609–cysteine 633. A DNA-binding region (nuclear receptor) is located at residues cysteine 573 to phenylalanine 645. Position 682 is a phosphoserine (serine 682). Positions glutamine 685–isoleucine 919 constitute an NR LBD domain. The segment at leucine 693–lysine 939 is AF2; mediates transcriptional activation.

This sequence belongs to the nuclear hormone receptor family. NR3 subfamily. As to quaternary structure, interacts with SMARD1 and UNC45A. Interacts with CUEDC2; the interaction promotes ubiquitination, decreases sumoylation, and represses transcriptional activity. Interacts with PIAS3; the interaction promotes sumoylation of PR in a hormone-dependent manner, inhibits DNA-binding, and alters nuclear export. Interacts with SP1; the interaction requires ligand-induced phosphorylation on Ser-349 by ERK1/2-MAPK. Interacts with PRMT2. Isoform A interacts with NCOR2. Isoform B (but not isoform A) interacts with NCOA2 and NCOA1. Isoform B (but not isoform A) interacts with KLF9. Interacts with GTF2B. Post-translationally, phosphorylated on multiple serine sites. Several of these sites are hormone-dependent. Phosphorylation on Ser-303 occurs preferentially on isoform B, is highly hormone-dependent and modulates ubiquitination and sumoylation on Lys-392. Phosphorylation on Ser-303 and Ser-349 also requires induction by hormone. Basal phosphorylation on Ser-200 and Ser-404 is increased in response to progesterone and can be phosphorylated in vitro by the CDK2-A1 complex. Increased levels of phosphorylation on Ser-404 also in the presence of EGF, heregulin, IGF, PMA and FBS. Phosphorylation at this site by CDK2 is ligand-independent, and increases nuclear translocation and transcriptional activity. Phosphorylation at Ser-303, but not at Ser-200, is impaired during the G(2)/M phase of the cell cycle. Phosphorylation on Ser-349 by ERK1/2 MAPK is required for interaction with SP1. Sumoylation is hormone-dependent and represses transcriptional activity. Sumoylation on all three sites is enhanced by PIAS3. Desumoylated by SENP1. Sumoylation on Lys-392, the main site of sumoylation, is repressed by ubiquitination on the same site, and modulated by phosphorylation at Ser-303. In terms of processing, ubiquitination is hormone-dependent and represses sumoylation on the same site. Promoted by MAPK-mediated phosphorylation on Ser-303. Post-translationally, palmitoylated by ZDHHC7 and ZDHHC21. Palmitoylation is required for plasma membrane targeting and for rapid intracellular signaling via ERK and AKT kinases and cAMP generation. As to expression, expressed in mammary gland and uterus.

Its subcellular location is the nucleus. The protein resides in the cytoplasm. In terms of biological role, the steroid hormones and their receptors are involved in the regulation of eukaryotic gene expression and affect cellular proliferation and differentiation in target tissues. Depending on the isoform, progesterone receptor functions as a transcriptional activator or repressor. Functionally, ligand-dependent transdominant repressor of steroid hormone receptor transcriptional activity including repression of its isoform B, MR and ER. Transrepressional activity may involve recruitment of corepressor NCOR2. Transcriptional activator of several progesteron-dependent promoters in a variety of cell types. Involved in activation of SRC-dependent MAPK signaling on hormone stimulation. This Canis lupus familiaris (Dog) protein is Progesterone receptor (PGR).